Consider the following 181-residue polypeptide: ATP-dependent protease subunit HslV (181 aa).

Thr-5 is an active-site residue. 3 residues coordinate Na(+): Ser-162, Cys-165, and Thr-168.

The protein belongs to the peptidase T1B family. HslV subfamily. A double ring-shaped homohexamer of HslV is capped on each side by a ring-shaped HslU homohexamer. The assembly of the HslU/HslV complex is dependent on binding of ATP.

The protein localises to the cytoplasm. The catalysed reaction is ATP-dependent cleavage of peptide bonds with broad specificity.. Allosterically activated by HslU binding. Protease subunit of a proteasome-like degradation complex believed to be a general protein degrading machinery. The chain is ATP-dependent protease subunit HslV from Campylobacter hominis (strain ATCC BAA-381 / DSM 21671 / CCUG 45161 / LMG 19568 / NCTC 13146 / CH001A).